A 197-amino-acid polypeptide reads, in one-letter code: Histone chaperone asf1b-A (197 aa).

The protein belongs to the ASF1 family. In terms of assembly, interacts with histone H3 and histone H4.

It is found in the nucleus. In terms of biological role, histone chaperone that facilitates histone deposition and histone exchange and removal during nucleosome assembly and disassembly. The polypeptide is Histone chaperone asf1b-A (asf1ba) (Danio rerio (Zebrafish)).